A 128-amino-acid polypeptide reads, in one-letter code: Probable soluble cytochrome b562 2 (128 aa).

The signal sequence occupies residues 1–22 (MGKTLMALITAALLSTSSLVMA). Residues M29 and H124 each contribute to the heme b site.

The protein belongs to the cytochrome b562 family. The cofactor is heme b.

Its subcellular location is the periplasm. Electron-transport protein of unknown function. The protein is Probable soluble cytochrome b562 2 (cybC2) of Yersinia pestis.